A 480-amino-acid polypeptide reads, in one-letter code: Carboxy-terminal processing protease CtpB (480 aa).

An N-terminal signal peptide occupies residues 1–23 (MNQKIMAVIAAGSMLFGGAGVYA). In terms of domain architecture, PDZ spans 92–182 (SVYMDKQTAK…SSVSMKIQRP (91 aa)). The interval 113 to 116 (GIGA) is peptide binding. The active-site Nucleophile is S309. Active-site charge relay system residues include K334 and Q338.

It belongs to the peptidase S41A family. As to quaternary structure, homodimer. Is cleaved by SpoIVB in vitro and in vivo but this cleavage does not appear to be necessary for CtpB activation. CtpB can also cleave itself in vivo.

The protein resides in the forespore intermembrane space. It carries out the reaction The enzyme shows specific recognition of a C-terminal tripeptide, Xaa-Yaa-Zaa, in which Xaa is preferably Ala or Leu, Yaa is preferably Ala or Tyr, and Zaa is preferably Ala, but then cleaves at a variable distance from the C-terminus. A typical cleavage is -Ala-Ala-|-Arg-Ala-Ala-Lys-Glu-Asn-Tyr-Ala-Leu-Ala-Ala.. Activated by peptide binding to the PDZ domain. Its function is as follows. Involved in the signal transduction pathway leading to the proteolytic activation of the mother cell transcription factor pro-sigma-K during sporulation. The signaling serine protease CtpB triggers pro-sigma-K processing by cleaving the pre-processed regulatory protein SpoIVFA and is necessary for the proper timing of sigma-K activation. The protein is Carboxy-terminal processing protease CtpB (ctpB) of Bacillus subtilis (strain 168).